A 545-amino-acid polypeptide reads, in one-letter code: Glucose-6-phosphate isomerase (545 aa).

Glu351 serves as the catalytic Proton donor. Residues His382 and Lys510 contribute to the active site.

The protein belongs to the GPI family.

It is found in the cytoplasm. It catalyses the reaction alpha-D-glucose 6-phosphate = beta-D-fructose 6-phosphate. Its pathway is carbohydrate biosynthesis; gluconeogenesis. It functions in the pathway carbohydrate degradation; glycolysis; D-glyceraldehyde 3-phosphate and glycerone phosphate from D-glucose: step 2/4. Catalyzes the reversible isomerization of glucose-6-phosphate to fructose-6-phosphate. This chain is Glucose-6-phosphate isomerase, found in Helicobacter pylori (strain G27).